The sequence spans 570 residues: 5-aminolevulinate synthase, mitochondrial (570 aa).

Residues 1–53 (MESVIRSSAKICPFMHSATGSMQSVKALKNANLPAIAQQCPFMGKAMEQRRGY) constitute a mitochondrion transit peptide. Arg119, Ser232, and Lys251 together coordinate substrate. Ser284, His312, and Thr356 together coordinate pyridoxal 5'-phosphate. Lys359 is an active-site residue. Lys359 is subject to N6-(pyridoxal phosphate)lysine. Thr388 and Thr389 together coordinate pyridoxal 5'-phosphate. Thr474 contacts substrate.

The protein belongs to the class-II pyridoxal-phosphate-dependent aminotransferase family. Homodimer. Pyridoxal 5'-phosphate serves as cofactor.

Its subcellular location is the mitochondrion matrix. The catalysed reaction is succinyl-CoA + glycine + H(+) = 5-aminolevulinate + CO2 + CoA. Its pathway is porphyrin-containing compound metabolism; protoporphyrin-IX biosynthesis; 5-aminolevulinate from glycine: step 1/1. Functionally, catalyzes the synthesis of 5-aminolevulinate (ALA) from succinyl-CoA and glycine, the first and rate-limiting step in heme biosynthesis. This chain is 5-aminolevulinate synthase, mitochondrial (HEM1), found in Kluyveromyces lactis (strain ATCC 8585 / CBS 2359 / DSM 70799 / NBRC 1267 / NRRL Y-1140 / WM37) (Yeast).